Here is a 257-residue protein sequence, read N- to C-terminus: Pyrroline-5-carboxylate reductase (257 aa).

Belongs to the pyrroline-5-carboxylate reductase family.

The protein resides in the cytoplasm. The enzyme catalyses L-proline + NADP(+) = (S)-1-pyrroline-5-carboxylate + NADPH + 2 H(+). The catalysed reaction is L-proline + NAD(+) = (S)-1-pyrroline-5-carboxylate + NADH + 2 H(+). The protein operates within amino-acid biosynthesis; L-proline biosynthesis; L-proline from L-glutamate 5-semialdehyde: step 1/1. Functionally, catalyzes the reduction of 1-pyrroline-5-carboxylate (PCA) to L-proline. This Helicobacter pylori (strain ATCC 700392 / 26695) (Campylobacter pylori) protein is Pyrroline-5-carboxylate reductase.